The primary structure comprises 876 residues: ATP-dependent helicase Lhr-Core (876 aa).

Residues glutamine 37, lysine 60, threonine 61, aspartate 175, glutamate 176, arginine 374, and histidine 377 each contribute to the ATP site. Positions 41–232 (IPLIKKGKNV…FLVGGNGDYE (192 aa)) constitute a Helicase ATP-binding domain. The DEAH box signature appears at 175 to 178 (DEIH). The Helicase C-terminal domain occupies 249–421 (PVKDLVHATE…NIHVPENPLD (173 aa)). The WH domain stretch occupies residues 422-506 (VLTQLIVAAS…IFFLNSGTIP (85 aa)). The tract at residues 507–876 (DEAMIPVKME…DLEYTEAGIK (370 aa)) is domain 4.

Belongs to the Lhr helicase family. Lhr-Core subfamily. As to quaternary structure, monomer.

It carries out the reaction Couples ATP hydrolysis with the unwinding of duplex DNA by translocating in the 3'-5' direction.. The catalysed reaction is ATP + H2O = ADP + phosphate + H(+). In terms of biological role, probably part of a 4-gene DNA damage response locus in which the upstream ups system, in combination with this downstream locus, functions in homologous recombination to rescue Sulfolobales from DNA-damaging threats. DNA helicase that translocates in a 3'-5' direction on single-stranded (ss)DNA. Binds Holliday junction (HJ) DNA, Y-shaped DNA, DNA with a 3'-overhang and single-stranded (ss)DNA with high affinity; binds double-stranded (ds)DNA with less affinity. Has helicase activity on DNA with a 3'-overhang, Y-shaped DNA and HJ DNA. Does not unwind blunt-ended dsDNA or DNA with a 5'-overhang. The protein is ATP-dependent helicase Lhr-Core of Sulfolobus acidocaldarius (strain ATCC 33909 / DSM 639 / JCM 8929 / NBRC 15157 / NCIMB 11770).